Reading from the N-terminus, the 518-residue chain is 3-octaprenyl-4-hydroxybenzoate carboxy-lyase (518 aa).

N177 lines the Mn(2+) pocket. Prenylated FMN contacts are provided by residues 180-182, 194-196, and 199-200; these read IYR, RWL, and RG. E243 contributes to the Mn(2+) binding site. D318 acts as the Proton donor in catalysis.

This sequence belongs to the UbiD family. In terms of assembly, homohexamer. Prenylated FMN serves as cofactor. The cofactor is Mn(2+).

It localises to the cell membrane. The enzyme catalyses a 4-hydroxy-3-(all-trans-polyprenyl)benzoate + H(+) = a 2-(all-trans-polyprenyl)phenol + CO2. The protein operates within cofactor biosynthesis; ubiquinone biosynthesis. Catalyzes the decarboxylation of 3-octaprenyl-4-hydroxy benzoate to 2-octaprenylphenol, an intermediate step in ubiquinone biosynthesis. This chain is 3-octaprenyl-4-hydroxybenzoate carboxy-lyase, found in Burkholderia orbicola (strain AU 1054).